The sequence spans 156 residues: Small ribosomal subunit protein uS7 (156 aa).

This sequence belongs to the universal ribosomal protein uS7 family. As to quaternary structure, part of the 30S ribosomal subunit. Contacts proteins S9 and S11.

In terms of biological role, one of the primary rRNA binding proteins, it binds directly to 16S rRNA where it nucleates assembly of the head domain of the 30S subunit. Is located at the subunit interface close to the decoding center, probably blocks exit of the E-site tRNA. This is Small ribosomal subunit protein uS7 from Cupriavidus metallidurans (strain ATCC 43123 / DSM 2839 / NBRC 102507 / CH34) (Ralstonia metallidurans).